Reading from the N-terminus, the 420-residue chain is Acetyl-CoA acetyltransferase A, mitochondrial (420 aa).

The N-terminal 33 residues, 1-33, are a transit peptide targeting the mitochondrion; the sequence is MAFCGTRTAARLSHSTRALHNTHRNFASQRTLN. Catalysis depends on Cys-119, which acts as the Acyl-thioester intermediate. Residues Tyr-212, 251–253, and Lys-256 each bind CoA; that span reads RVD. Tyr-212 provides a ligand contact to K(+). K(+) is bound by residues Ala-273 and Ala-274. Ser-277 lines the CoA pocket. Val-374 contacts K(+). Cys-406 (proton donor/acceptor) is an active-site residue.

Belongs to the thiolase-like superfamily. Thiolase family. As to quaternary structure, homotetramer.

Its subcellular location is the mitochondrion. It carries out the reaction 2 acetyl-CoA = acetoacetyl-CoA + CoA. The enzyme catalyses propanoyl-CoA + acetyl-CoA = 2-methyl-3-oxobutanoyl-CoA + CoA. It functions in the pathway lipid metabolism; fatty acid beta-oxidation. In terms of biological role, this is one of the enzymes that catalyzes the last step of the mitochondrial beta-oxidation pathway, an aerobic process breaking down fatty acids into acetyl-CoA. Using free coenzyme A/CoA, catalyzes the thiolytic cleavage of medium- to long-chain 3-oxoacyl-CoAs into acetyl-CoA and a fatty acyl-CoA shortened by two carbon atoms. The activity of the enzyme is reversible and it can also catalyze the condensation of two acetyl-CoA molecules into acetoacetyl-CoA. Thereby, it plays a major role in ketone body metabolism. The sequence is that of Acetyl-CoA acetyltransferase A, mitochondrial (acat1-a) from Xenopus laevis (African clawed frog).